The chain runs to 191 residues: Thymidylate kinase (191 aa).

7-14 (GIDTCGKS) lines the ATP pocket.

Belongs to the thymidylate kinase family.

It catalyses the reaction dTMP + ATP = dTDP + ADP. Its function is as follows. Phosphorylation of dTMP to form dTDP in both de novo and salvage pathways of dTTP synthesis. The chain is Thymidylate kinase from Sulfurovum sp. (strain NBC37-1).